Reading from the N-terminus, the 404-residue chain is Glycerol-1-phosphate dehydrogenase [NAD(P)+] (404 aa).

NAD(+) is bound by residues Asp56, 118-122, and 140-143; these read GTIHD and TAPS. Asp145 contacts substrate. An NAD(+)-binding site is contributed by Ser149. Asp192 serves as a coordination point for substrate. Residues Asp192 and His272 each coordinate Ni(2+). A substrate-binding site is contributed by His276. Residue His292 participates in Ni(2+) binding.

This sequence belongs to the glycerol-1-phosphate dehydrogenase family. Homodimer. The cofactor is Ni(2+).

It is found in the cytoplasm. The catalysed reaction is sn-glycerol 1-phosphate + NAD(+) = dihydroxyacetone phosphate + NADH + H(+). The enzyme catalyses sn-glycerol 1-phosphate + NADP(+) = dihydroxyacetone phosphate + NADPH + H(+). Its function is as follows. Catalyzes the NAD(P)H-dependent reduction of dihydroxyacetonephosphate (DHAP or glycerone phosphate) to glycerol 1-phosphate (G1P). The G1P thus generated is probably used for the synthesis of phosphoglycerolipids in Gram-positive bacterial species. The chain is Glycerol-1-phosphate dehydrogenase [NAD(P)+] from Geobacillus stearothermophilus (Bacillus stearothermophilus).